The chain runs to 306 residues: Aspartate carbamoyltransferase catalytic subunit (306 aa).

Residues R54 and T55 each contribute to the carbamoyl phosphate site. K83 lines the L-aspartate pocket. The carbamoyl phosphate site is built by R104, H132, and Q135. L-aspartate is bound by residues R165 and R227. Positions 266 and 267 each coordinate carbamoyl phosphate.

It belongs to the aspartate/ornithine carbamoyltransferase superfamily. ATCase family. As to quaternary structure, heterododecamer (2C3:3R2) of six catalytic PyrB chains organized as two trimers (C3), and six regulatory PyrI chains organized as three dimers (R2).

It carries out the reaction carbamoyl phosphate + L-aspartate = N-carbamoyl-L-aspartate + phosphate + H(+). The protein operates within pyrimidine metabolism; UMP biosynthesis via de novo pathway; (S)-dihydroorotate from bicarbonate: step 2/3. Functionally, catalyzes the condensation of carbamoyl phosphate and aspartate to form carbamoyl aspartate and inorganic phosphate, the committed step in the de novo pyrimidine nucleotide biosynthesis pathway. This is Aspartate carbamoyltransferase catalytic subunit from Finegoldia magna (strain ATCC 29328 / DSM 20472 / WAL 2508) (Peptostreptococcus magnus).